The chain runs to 177 residues: Large ribosomal subunit protein uL6 (177 aa).

It belongs to the universal ribosomal protein uL6 family. Part of the 50S ribosomal subunit.

Functionally, this protein binds to the 23S rRNA, and is important in its secondary structure. It is located near the subunit interface in the base of the L7/L12 stalk, and near the tRNA binding site of the peptidyltransferase center. The sequence is that of Large ribosomal subunit protein uL6 from Rickettsia rickettsii (strain Iowa).